The primary structure comprises 806 residues: Cell cycle progression protein 1 (806 aa).

At 1–216 (MSENSSDSDS…KRQFSSGLNK (216 aa)) the chain is on the cytoplasmic side. The interval 1–307 (MSENSSDSDS…QKTNLATENQ (307 aa)) is interaction with MCF2L and SRC. 2 disordered regions span residues 80–105 (SSTI…DDSD) and 152–207 (VFSS…KESK). The segment covering 175-184 (FRRRRARKKT) has biased composition (basic residues). Position 186 is a phosphoserine (serine 186). The span at 190 to 207 (SEDRLVAEQETEPSKESK) shows a compositional bias: basic and acidic residues. The chain crosses the membrane as a helical; Signal-anchor for type II membrane protein span at residues 217 to 237 (CVILALVIAVSMGFGHFYGTI). Over 238–806 (QIQKRQQLVR…LGQLPFDPQY (569 aa)) the chain is Lumenal. Positions 305-449 (ENQYLRVSLE…EQQRSDLWER (145 aa)) form a coiled coil. A compositionally biased stretch (basic and acidic residues) spans 457–467 (QSGKQETDGKK). Positions 457–478 (QSGKQETDGKKKVGRGNHRAKN) are disordered. Residues 468–478 (KVGRGNHRAKN) are compositionally biased toward basic residues. The stretch at 503–529 (VRHHKEKIKQAKEAVKENLKKFSDSVK) forms a coiled coil. Positions 758-778 (SRHRKQEQKHLQPQPYKREGK) are disordered.

It belongs to the CCPG1 family. Interacts with MCF2L. May interact with MCF2, ARHGEF1, BCR, VAV1 and FGD1, but not with TIAM1. Interacts with GTP-bound CDC42 and SRC.

It is found in the cytoplasmic granule membrane. Functionally, acts as an assembly platform for Rho protein signaling complexes. Limits guanine nucleotide exchange activity of MCF2L toward RHOA, which results in an inhibition of both its transcriptional activation ability and its transforming activity. Does not inhibit activity of MCF2L toward CDC42, or activity of MCF2 toward either RHOA or CDC42. May be involved in cell cycle regulation. In Pongo abelii (Sumatran orangutan), this protein is Cell cycle progression protein 1 (CCPG1).